We begin with the raw amino-acid sequence, 102 residues long: Small ribosomal subunit protein eS24 (102 aa).

It belongs to the eukaryotic ribosomal protein eS24 family.

This chain is Small ribosomal subunit protein eS24, found in Methanococcus maripaludis (strain C5 / ATCC BAA-1333).